The following is a 167-amino-acid chain: Cytochrome c-type biogenesis protein CcmE (167 aa).

Over 1-7 the chain is Cytoplasmic; that stretch reads MTRKTRR. Residues 8 to 28 form a helical; Signal-anchor for type II membrane protein membrane-spanning segment; sequence LWIVIACLACVGSAAALTLRA. At 29-167 the chain is on the periplasmic side; it reads FSSNIVFFMA…DTMTAKKAGG (139 aa). Positions 125 and 129 each coordinate heme. A compositionally biased stretch (basic and acidic residues) spans 141 to 150; that stretch reads TGKWDPRFGK. Residues 141–167 are disordered; that stretch reads TGKWDPRFGKAPDASSWDTMTAKKAGG.

This sequence belongs to the CcmE/CycJ family.

It localises to the cell inner membrane. Heme chaperone required for the biogenesis of c-type cytochromes. Transiently binds heme delivered by CcmC and transfers the heme to apo-cytochromes in a process facilitated by CcmF and CcmH. The polypeptide is Cytochrome c-type biogenesis protein CcmE (Gluconobacter oxydans (strain 621H) (Gluconobacter suboxydans)).